The primary structure comprises 161 residues: ERDLLVAVTMDHELGHNLGIRHDTGSCSCGGYSCVMSPVISHDISKYFSDCSYIQCWDFIMKENPQCILNKHLRTDTVSTPVSGNELLEAGEECDCGTPGNPCCDAATCKLRPGAQCAEGLCCDQCRFKGAGKICRRARGDNPDDRCTGQSADCPRNRFHA.

Positions 1 to 72 constitute a Peptidase M12B domain; it reads ERDLLVAVTM…ENPQCILNKH (72 aa). Zn(2+) is bound at residue H12. Residue E13 is part of the active site. The Zn(2+) site is built by H16 and H22. 2 cysteine pairs are disulfide-bonded: C27–C51 and C29–C34. Residues 73–88 constitute a propeptide that is removed on maturation; that stretch reads LRTDTVSTPVSGNELL. The region spanning 89-161 is the Disintegrin domain; that stretch reads EAGEECDCGT…ADCPRNRFHA (73 aa). Intrachain disulfides connect C94–C109, C96–C104, C103–C126, C117–C123, C122–C147, and C135–C154. A Cell attachment site motif is present at residues 139-141; it reads RGD.

The protein belongs to the venom metalloproteinase (M12B) family. P-II subfamily. P-IIa sub-subfamily. As to quaternary structure, monomer. Expressed by the venom gland.

It localises to the secreted. Impairs hemostasis in the envenomed animal. Functionally, disintegrin: inhibit platelet aggregation induced by ADP, thrombin, platelet-activating factor and collagen. Acts by inhibiting fibrinogen interaction with platelet receptors GPIIb/GPIIIa (ITGA2B/ITGB3). The sequence is that of Zinc metalloproteinase/disintegrin from Bothrops jararaca (Jararaca).